Consider the following 115-residue polypeptide: Large ribosomal subunit protein bL20 (115 aa).

The protein belongs to the bacterial ribosomal protein bL20 family.

Its function is as follows. Binds directly to 23S ribosomal RNA and is necessary for the in vitro assembly process of the 50S ribosomal subunit. It is not involved in the protein synthesizing functions of that subunit. The chain is Large ribosomal subunit protein bL20 from Chlorobium luteolum (strain DSM 273 / BCRC 81028 / 2530) (Pelodictyon luteolum).